Consider the following 212-residue polypeptide: Glycerol-3-phosphate acyltransferase (212 aa).

Helical transmembrane passes span 3 to 23 (LILLIIAAYLLGSIPTGLWIG), 69 to 89 (LLPMWLGVTHISPLLFGFFAI), 110 to 130 (AGILLGFAPFYLIFLLFIFFF), 143 to 163 (VIAASIAIITVLIFPALHFLL), and 165 to 185 (DYDFLFVLIVISAGSLIIIRH).

Belongs to the PlsY family. Probably interacts with PlsX.

It localises to the cell membrane. It carries out the reaction an acyl phosphate + sn-glycerol 3-phosphate = a 1-acyl-sn-glycero-3-phosphate + phosphate. The protein operates within lipid metabolism; phospholipid metabolism. Functionally, catalyzes the transfer of an acyl group from acyl-phosphate (acyl-PO(4)) to glycerol-3-phosphate (G3P) to form lysophosphatidic acid (LPA). This enzyme utilizes acyl-phosphate as fatty acyl donor, but not acyl-CoA or acyl-ACP. In Streptococcus mutans serotype c (strain ATCC 700610 / UA159), this protein is Glycerol-3-phosphate acyltransferase.